The sequence spans 524 residues: GMP synthase [glutamine-hydrolyzing] (524 aa).

The 199-residue stretch at 9-207 (RILILDFSSQ…VIHICQCIPN (199 aa)) folds into the Glutamine amidotransferase type-1 domain. Residue C86 is the Nucleophile of the active site. Residues H181 and E183 contribute to the active site. Positions 208–399 (WTTKHIIEDS…LGLPADLIYR (192 aa)) constitute a GMPS ATP-PPase domain. ATP is bound at residue 235–241 (SGGVDSA).

Homodimer.

The enzyme catalyses XMP + L-glutamine + ATP + H2O = GMP + L-glutamate + AMP + diphosphate + 2 H(+). It functions in the pathway purine metabolism; GMP biosynthesis; GMP from XMP (L-Gln route): step 1/1. Functionally, catalyzes the synthesis of GMP from XMP. In Coxiella burnetii (strain Dugway 5J108-111), this protein is GMP synthase [glutamine-hydrolyzing].